We begin with the raw amino-acid sequence, 134 residues long: D-ribose pyranase (134 aa).

The active-site Proton donor is the histidine 20. Residues aspartate 28, histidine 101, and 123–125 contribute to the substrate site; that span reads YSN.

This sequence belongs to the RbsD / FucU family. RbsD subfamily. Homodecamer.

It localises to the cytoplasm. The enzyme catalyses beta-D-ribopyranose = beta-D-ribofuranose. It participates in carbohydrate metabolism; D-ribose degradation; D-ribose 5-phosphate from beta-D-ribopyranose: step 1/2. In terms of biological role, catalyzes the interconversion of beta-pyran and beta-furan forms of D-ribose. The sequence is that of D-ribose pyranase from Pseudomonas syringae pv. tomato (strain ATCC BAA-871 / DC3000).